An 869-amino-acid chain; its full sequence is Alanine--tRNA ligase (869 aa).

H559, H563, C660, and H664 together coordinate Zn(2+).

This sequence belongs to the class-II aminoacyl-tRNA synthetase family. Zn(2+) serves as cofactor.

It localises to the cytoplasm. The catalysed reaction is tRNA(Ala) + L-alanine + ATP = L-alanyl-tRNA(Ala) + AMP + diphosphate. Its function is as follows. Catalyzes the attachment of alanine to tRNA(Ala) in a two-step reaction: alanine is first activated by ATP to form Ala-AMP and then transferred to the acceptor end of tRNA(Ala). Also edits incorrectly charged Ser-tRNA(Ala) and Gly-tRNA(Ala) via its editing domain. This Herminiimonas arsenicoxydans protein is Alanine--tRNA ligase.